Here is a 932-residue protein sequence, read N- to C-terminus: Eukaryotic translation initiation factor 3 subunit A (932 aa).

The PCI domain maps to 309–492 (KPATANFVIL…NSISFSSDLF (184 aa)). Phosphoserine occurs at positions 374 and 501. Positions 537 to 862 (LRKQQAEAAY…DEEISRKLAE (326 aa)) form a coiled coil. The span at 793–865 (AEEEAARAAE…ISRKLAEKAA (73 aa)) shows a compositional bias: basic and acidic residues. Residues 793–932 (AEEEAARAAE…PPSRRNQQQQ (140 aa)) form a disordered region. Residues Ser-874, Ser-875, and Ser-877 each carry the phosphoserine modification. A compositionally biased stretch (low complexity) spans 877-893 (SPGAWRRGGASAGGVSR).

It belongs to the eIF-3 subunit A family. As to quaternary structure, component of the eukaryotic translation initiation factor 3 (eIF-3) complex. The eIF-3 complex appears to include tif32/eif3a, SPAC25G10.08/eif3b, tif33/eif3c, SPBC4C3.07/eif3f, tif35/eif3g and sum1/eif3i. This set of common subunits may also associate exclusively with either moe1/eif3d and int6/eif3e, or with SPAC821.05/eif3h and SPAC1751.03/eif3m. The eIF-3 complex may also include SPAC3A12.13c/eif3j.

The protein resides in the cytoplasm. RNA-binding component of the eukaryotic translation initiation factor 3 (eIF-3) complex, which is involved in protein synthesis of a specialized repertoire of mRNAs and, together with other initiation factors, stimulates binding of mRNA and methionyl-tRNAi to the 40S ribosome. The eIF-3 complex specifically targets and initiates translation of a subset of mRNAs involved in cell proliferation. In Schizosaccharomyces pombe (strain 972 / ATCC 24843) (Fission yeast), this protein is Eukaryotic translation initiation factor 3 subunit A (tif32).